The primary structure comprises 185 residues: Threonylcarbamoyl-AMP synthase (185 aa).

The region spanning Met-1–Gly-185 is the YrdC-like domain. The interval Glu-163–Gly-185 is disordered. The segment covering Thr-164–Lys-177 has biased composition (basic and acidic residues).

This sequence belongs to the SUA5 family. TsaC subfamily.

It localises to the cytoplasm. It catalyses the reaction L-threonine + hydrogencarbonate + ATP = L-threonylcarbamoyladenylate + diphosphate + H2O. Functionally, required for the formation of a threonylcarbamoyl group on adenosine at position 37 (t(6)A37) in tRNAs that read codons beginning with adenine. Catalyzes the conversion of L-threonine, HCO(3)(-)/CO(2) and ATP to give threonylcarbamoyl-AMP (TC-AMP) as the acyladenylate intermediate, with the release of diphosphate. In Vibrio campbellii (strain ATCC BAA-1116), this protein is Threonylcarbamoyl-AMP synthase.